The primary structure comprises 144 residues: MAGVSVRDVAAQDFINAYASFLQRQGKLEVPGYVDIVKTSSGNEMPPQDAEGWFYKRAASVARHIYMRKQVGVGKLNKLYGGAKSRGVRPYKHIDASGSINRKVLQALEKIGIVEISPKGGRRISENGQRDLDRIAAQTLEEDE.

Belongs to the eukaryotic ribosomal protein eS19 family. As to quaternary structure, component of the small ribosomal subunit (SSU). Mature yeast ribosomes consist of a small (40S) and a large (60S) subunit. The 40S small subunit contains 1 molecule of ribosomal RNA (18S rRNA) and 33 different proteins (encoded by 57 genes). The large 60S subunit contains 3 rRNA molecules (25S, 5.8S and 5S rRNA) and 46 different proteins (encoded by 81 genes).

It is found in the cytoplasm. Component of the ribosome, a large ribonucleoprotein complex responsible for the synthesis of proteins in the cell. The small ribosomal subunit (SSU) binds messenger RNAs (mRNAs) and translates the encoded message by selecting cognate aminoacyl-transfer RNA (tRNA) molecules. The large subunit (LSU) contains the ribosomal catalytic site termed the peptidyl transferase center (PTC), which catalyzes the formation of peptide bonds, thereby polymerizing the amino acids delivered by tRNAs into a polypeptide chain. The nascent polypeptides leave the ribosome through a tunnel in the LSU and interact with protein factors that function in enzymatic processing, targeting, and the membrane insertion of nascent chains at the exit of the ribosomal tunnel. eS19 is required for proper maturation of the small (40S) ribosomal subunit. Binds to 40S pre-ribosomal particles, probably required after association of NOC4 but before association of ENP1, TSR1 and RIO2 with 20/21S pre-rRNA. In terms of biological role, required for proper maturation of the small (40S) ribosomal subunit. Binds to 40s pre-ribosomal particles, probably required after association of NOC4 but before association of ENP1, TSR1 and RIO2 with 20/21S pre-rRNA. The chain is Small ribosomal subunit protein eS19B from Saccharomyces cerevisiae (strain ATCC 204508 / S288c) (Baker's yeast).